Here is a 262-residue protein sequence, read N- to C-terminus: 27 kDa lipoprotein antigen (262 aa).

Positions 1-28 (MSASCAVPRLTRFAVFAVAGATALSLSA) are cleaved as a signal peptide. 2 stretches are compositionally biased toward low complexity: residues 28-57 (ACGS…PSST) and 148-158 (STPGGASSTPP). Disordered regions lie at residues 28–60 (ACGS…TPNA) and 138–171 (VNGT…KPAW). Cys-29 carries the N-palmitoyl cysteine lipid modification. The S-diacylglycerol cysteine moiety is linked to residue Cys-29.

Its subcellular location is the cell membrane. This is 27 kDa lipoprotein antigen (Mi43) from Mycobacterium intracellulare.